The following is a 384-amino-acid chain: Lipid-A-disaccharide synthase (384 aa).

It belongs to the LpxB family.

The catalysed reaction is 2-N,3-O-bis[(3R)-3-hydroxytetradecanoyl]-alpha-D-glucosaminyl 1-phosphate + UDP-2-N,3-O-bis[(3R)-3-hydroxytetradecanoyl]-alpha-D-glucosamine = lipid A disaccharide (E. coli) + UDP + H(+). It carries out the reaction a lipid X + a UDP-2-N,3-O-bis[(3R)-3-hydroxyacyl]-alpha-D-glucosamine = a lipid A disaccharide + UDP + H(+). The protein operates within glycolipid biosynthesis; lipid IV(A) biosynthesis; lipid IV(A) from (3R)-3-hydroxytetradecanoyl-[acyl-carrier-protein] and UDP-N-acetyl-alpha-D-glucosamine: step 5/6. Functionally, condensation of UDP-2,3-diacylglucosamine and 2,3-diacylglucosamine-1-phosphate to form lipid A disaccharide, a precursor of lipid A, a phosphorylated glycolipid that anchors the lipopolysaccharide to the outer membrane of the cell. The sequence is that of Lipid-A-disaccharide synthase from Blochmanniella floridana.